The chain runs to 927 residues: Calmodulin-binding transcription activator CBT (927 aa).

Residues 26–152 (YEKLVAEAAA…YRQTAEENAM (127 aa)) constitute a DNA-binding region (CG-1). A necessary and sufficient for nuclear localization region spans residues 70–96 (LYDRKVVRNFRKDGHNWKKKKDGRTVQ). Positions 72–79 (DRKVVRNF) match the Nuclear localization signal motif. An ANK repeat occupies 609–638 (SGWTALHWAAYHGRERMVATLLSAGANPSL). IQ domains lie at 757–786 (EIVA…IQSH) and 799–828 (MRRQ…SVGI). A calmodulin-binding region spans residues 826–845 (VGIVEKAILRWRKKRKGLRG). Residues 830 to 851 (EKAILRWRKKRKGLRGIASGMP) are necessary and sufficient for nuclear localization. The region spanning 882-911 (FNRSVVRVQALFRSYKAQQEYRRMKIAHEE) is the IQ 3 domain.

It belongs to the CAMTA family.

It is found in the nucleus. With respect to regulation, transcriptional activation activity is strongly reduced by calmodulin. Functionally, transcription activator that binds calmodulin in a calcium-dependent manner in vitro. Binds to the DNA consensus sequence 5'-T[AC]CG[CT]GT[GT][GT][GT][GT]T[GT]CG-3'. The sequence is that of Calmodulin-binding transcription activator CBT from Oryza sativa subsp. japonica (Rice).